The chain runs to 417 residues: Serine hydroxymethyltransferase (417 aa).

(6S)-5,6,7,8-tetrahydrofolate contacts are provided by residues L121 and G125–L127. Position 229 is an N6-(pyridoxal phosphate)lysine (K229). S355–F357 is a binding site for (6S)-5,6,7,8-tetrahydrofolate.

It belongs to the SHMT family. As to quaternary structure, homodimer. Requires pyridoxal 5'-phosphate as cofactor.

The protein resides in the cytoplasm. It carries out the reaction (6R)-5,10-methylene-5,6,7,8-tetrahydrofolate + glycine + H2O = (6S)-5,6,7,8-tetrahydrofolate + L-serine. It participates in one-carbon metabolism; tetrahydrofolate interconversion. Its pathway is amino-acid biosynthesis; glycine biosynthesis; glycine from L-serine: step 1/1. Catalyzes the reversible interconversion of serine and glycine with tetrahydrofolate (THF) serving as the one-carbon carrier. This reaction serves as the major source of one-carbon groups required for the biosynthesis of purines, thymidylate, methionine, and other important biomolecules. Also exhibits THF-independent aldolase activity toward beta-hydroxyamino acids, producing glycine and aldehydes, via a retro-aldol mechanism. This is Serine hydroxymethyltransferase from Shewanella baltica (strain OS223).